The sequence spans 464 residues: UPF0210 protein Cgl1545/cg1743 (464 aa).

The protein belongs to the UPF0210 family. Homodimer.

This Corynebacterium glutamicum (strain ATCC 13032 / DSM 20300 / JCM 1318 / BCRC 11384 / CCUG 27702 / LMG 3730 / NBRC 12168 / NCIMB 10025 / NRRL B-2784 / 534) protein is UPF0210 protein Cgl1545/cg1743.